Consider the following 475-residue polypeptide: Bifunctional purple acid phosphatase 26 (475 aa).

Residues 1–30 form the signal peptide; sequence MNHLVIISVFLSSVLLLYRGESGITSSFIR. Residue Asn103 is glycosylated (N-linked (GlcNAc...) asparagine). Positions 162, 189, and 192 each coordinate Fe cation. Asp189 provides a ligand contact to Zn(2+). Residues Asn227 and His312 each contribute to the Zn(2+) site. Asn227 contacts substrate. The active-site Proton donor is the His322. Residue His349 coordinates Zn(2+). Substrate is bound at residue 349 to 351; sequence HVH. His351 serves as a coordination point for Fe cation. Asn365 and Asn422 each carry an N-linked (GlcNAc...) asparagine glycan.

The protein belongs to the metallophosphoesterase superfamily. Purple acid phosphatase family. Homodimer. Fe cation serves as cofactor. It depends on Zn(2+) as a cofactor. In terms of processing, glycosylated. In terms of tissue distribution, expressed in roots, stems, leaves, flowers and siliques.

It is found in the vacuole. It carries out the reaction a phosphate monoester + H2O = an alcohol + phosphate. The enzyme catalyses 2 a phenolic donor + H2O2 = 2 a phenolic radical donor + 2 H2O. Its activity is regulated as follows. Activated by Mg(2+), Co(2+), Mn(2+) and Ba(2+). Inhibited by Fe(2+), Cu(2+), Zn(2+), NaF, molybdate, arsenate, vanadate and inorganic phosphate. No effect of tartrate, Asp, Gln, glutathione, Asn, ascorbic acid and phosphite. In terms of biological role, metallo-phosphoesterase involved in phosphate metabolism. Acid phosphatase activity with phosphoenolpyruvate, inorganic pyrophosphate, phenyl-phosphate and p-nitrophenyl-phosphate as the most effective substrates. No activity with phytic acid, phosphocholine or bis-p-nitrophenyl-phosphate. Has a peroxidase activity at alkaline pH. The chain is Bifunctional purple acid phosphatase 26 (PAP26) from Arabidopsis thaliana (Mouse-ear cress).